The primary structure comprises 209 residues: Small ribosomal subunit protein uS4 (209 aa).

The segment at 23 to 46 (SRNPLLKKPHPPGQHGMQRKKKSD) is disordered. The region spanning 93-156 (CRLDNMVYRM…RKLQSVQESL (64 aa)) is the S4 RNA-binding domain.

Belongs to the universal ribosomal protein uS4 family. As to quaternary structure, part of the 30S ribosomal subunit. Contacts protein S5. The interaction surface between S4 and S5 is involved in control of translational fidelity.

In terms of biological role, one of the primary rRNA binding proteins, it binds directly to 16S rRNA where it nucleates assembly of the body of the 30S subunit. With S5 and S12 plays an important role in translational accuracy. This chain is Small ribosomal subunit protein uS4, found in Chlamydia caviae (strain ATCC VR-813 / DSM 19441 / 03DC25 / GPIC) (Chlamydophila caviae).